Consider the following 275-residue polypeptide: Urease accessory protein UreD (275 aa).

This sequence belongs to the UreD family. UreD, UreF and UreG form a complex that acts as a GTP-hydrolysis-dependent molecular chaperone, activating the urease apoprotein by helping to assemble the nickel containing metallocenter of UreC. The UreE protein probably delivers the nickel.

It localises to the cytoplasm. In terms of biological role, required for maturation of urease via the functional incorporation of the urease nickel metallocenter. The sequence is that of Urease accessory protein UreD from Cereibacter sphaeroides (strain ATCC 17023 / DSM 158 / JCM 6121 / CCUG 31486 / LMG 2827 / NBRC 12203 / NCIMB 8253 / ATH 2.4.1.) (Rhodobacter sphaeroides).